Here is a 561-residue protein sequence, read N- to C-terminus: Potassium-transporting ATPase potassium-binding subunit (561 aa).

12 consecutive transmembrane segments (helical) span residues 5–25 (LAAGLQVVFVLAVLAVAYVPV), 60–80 (YGYAGSVLGFSAASVLFLYAL), 86–106 (VLPLSGDLSGVSPAVAFNTAV), 131–151 (GLAVQNFVSAAVGMAVAVALI), 177–197 (ILLPFSFVIALILLSQGVIQS), 247–267 (PTPVSNIVEILAILLIPVSLT), 281–301 (LTLLAVMGILWGSLLAVTLAA), 324–344 (FGIPGTALFAVSTTGTSTGAV), 376–396 (GLYGILVLALIAVFVGGLLVG), 415–435 (ALSVLVMPALVLIGTGITVIL), 488–508 (ALGLCMLFGRFLPIIFVLALA), and 537–557 (GTVVLVAALTFFPALALGPIA).

It belongs to the KdpA family. In terms of assembly, the system is composed of three essential subunits: KdpA, KdpB and KdpC.

It is found in the cell membrane. Functionally, part of the high-affinity ATP-driven potassium transport (or Kdp) system, which catalyzes the hydrolysis of ATP coupled with the electrogenic transport of potassium into the cytoplasm. This subunit binds the extracellular potassium ions and delivers the ions to the membrane domain of KdpB through an intramembrane tunnel. The polypeptide is Potassium-transporting ATPase potassium-binding subunit (Rhodococcus opacus (strain B4)).